Reading from the N-terminus, the 147-residue chain is Histone-lysine N-methyltransferase, H3 lysine-37 specific (147 aa).

In terms of domain architecture, SET spans 8 to 116 (SPLEIRDTER…TNEELCISYG (109 aa)).

This sequence belongs to the class V-like SAM-binding methyltransferase superfamily. In terms of assembly, homodimer.

Its subcellular location is the cytoplasm. The protein resides in the nucleus. It carries out the reaction L-lysyl(37)-[histone H3] + S-adenosyl-L-methionine = N(6)-methyl-L-lysyl(37)-[histone H3] + S-adenosyl-L-homocysteine + H(+). The catalysed reaction is N(6)-methyl-L-lysyl(37)-[histone H3] + S-adenosyl-L-methionine = N(6),N(6)-dimethyl-L-lysyl(37)-[histone H3] + S-adenosyl-L-homocysteine + H(+). The enzyme catalyses N(6),N(6)-dimethyl-L-lysyl(37)-[histone H3] + S-adenosyl-L-methionine = N(6),N(6),N(6)-trimethyl-L-lysyl(37)-[histone H3] + S-adenosyl-L-homocysteine + H(+). Histone lysine methyltransferase that specifically mono-, di-, and trimethylates 'Lys-37' of histone H3 to regulate sporulation. This chain is Histone-lysine N-methyltransferase, H3 lysine-37 specific, found in Schizosaccharomyces pombe (strain 972 / ATCC 24843) (Fission yeast).